The sequence spans 192 residues: Adenylate kinase (192 aa).

12–17 contributes to the ATP binding site; that stretch reads GSGKTT. Residues 34-63 are NMP; sequence STGDLLRAQVASGSELGKTIDSFISKGNLV. Residues T35, R40, 61 to 63, 88 to 91, and Q95 each bind AMP; these read NLV and GYPR. The segment at 130–136 is LID; the sequence is GRNRGAD. ATP is bound at residue R131. AMP is bound by residues R133 and R145. R173 serves as a coordination point for ATP.

It belongs to the adenylate kinase family. Monomer.

It is found in the cytoplasm. It catalyses the reaction AMP + ATP = 2 ADP. The protein operates within purine metabolism; AMP biosynthesis via salvage pathway; AMP from ADP: step 1/1. Its function is as follows. Catalyzes the reversible transfer of the terminal phosphate group between ATP and AMP. Plays an important role in cellular energy homeostasis and in adenine nucleotide metabolism. In Campylobacter jejuni subsp. doylei (strain ATCC BAA-1458 / RM4099 / 269.97), this protein is Adenylate kinase.